Here is a 271-residue protein sequence, read N- to C-terminus: GTP cyclohydrolase FolE2 (271 aa).

The protein belongs to the GTP cyclohydrolase IV family.

The catalysed reaction is GTP + H2O = 7,8-dihydroneopterin 3'-triphosphate + formate + H(+). It participates in cofactor biosynthesis; 7,8-dihydroneopterin triphosphate biosynthesis; 7,8-dihydroneopterin triphosphate from GTP: step 1/1. Functionally, converts GTP to 7,8-dihydroneopterin triphosphate. This chain is GTP cyclohydrolase FolE2, found in Geotalea uraniireducens (strain Rf4) (Geobacter uraniireducens).